The following is a 457-amino-acid chain: Multidrug resistance protein MdtK (457 aa).

Topologically, residues 1–10 (MQKYISEARL) are cytoplasmic. The chain crosses the membrane as a helical span at residues 11–31 (LLALAIPVILAQIAQTAMGFV). Topologically, residues 32–52 (DTVMAGGYSATDMAAVAIGTS) are periplasmic. The chain crosses the membrane as a helical span at residues 53–73 (IWLPAILFGHGLLLALTPVIA). The Cytoplasmic segment spans residues 74 to 92 (QLNGSGRRERIAHQVRQGF). Residues 93–113 (WLAGFVSVLIMLVLWNAGYII) form a helical membrane-spanning segment. The Periplasmic segment spans residues 114–126 (RSMENIDPALADK). The helical transmembrane segment at 127–147 (AVGYLRALLWGAPGYLFFQVA) threads the bilayer. The Cytoplasmic segment spans residues 148-159 (RNQCEGLAKTKP). A helical transmembrane segment spans residues 160-180 (GMVMGFIGLLVNIPVNYIFIY). Residues 181–191 (GHFGMPELSGV) are Periplasmic-facing. A helical membrane pass occupies residues 192 to 212 (GCGVATAAVYWAMFLAMVSYI). Over 213–242 (KRARSMRDIRNEKGTAKPDPAVMKRLIQLG) the chain is Cytoplasmic. The helical transmembrane segment at 243–263 (LPIALALFFEVTLFAVVALLV) threads the bilayer. Topologically, residues 264-275 (SPLGIVDVAGHQ) are periplasmic. Residues 276–296 (IALNFSSLMFVLPMSLAAAVT) traverse the membrane as a helical segment. The Cytoplasmic portion of the chain corresponds to 297–313 (IRVGYRLGQGSTLDAQT). The chain crosses the membrane as a helical span at residues 314 to 334 (AARTGLMVGVCMATLTAIFTV). The Periplasmic segment spans residues 335–349 (SLREQIALLYNDNPE). Residues 350-370 (VVTLAAHLMLLAAVYQISDSI) traverse the membrane as a helical segment. Residues 371–386 (QVIGSGILRGYKDTRS) lie on the Cytoplasmic side of the membrane. Residues 387–407 (IFYITFTAYWVLGLPSGYILA) form a helical membrane-spanning segment. The Periplasmic segment spans residues 408-417 (LTDLVVEPMG). Residues 418–438 (PAGFWIGFIIGLTSAAIMMML) form a helical membrane-spanning segment. The Cytoplasmic portion of the chain corresponds to 439–457 (RMRFLQRLPSAIILQRASR).

It belongs to the multi antimicrobial extrusion (MATE) (TC 2.A.66.1) family. MdtK subfamily.

The protein localises to the cell inner membrane. In terms of biological role, multidrug efflux pump that functions probably as a Na(+)/drug antiporter. This is Multidrug resistance protein MdtK from Shigella dysenteriae serotype 1 (strain Sd197).